The sequence spans 704 residues: MANENHGSPREEASLLSHSPGTSNQSQPCSPKPIRLVQDLPEELVHAGWEKCWSRRENRPYYFNRFTNQSLWEMPVLGQHDVISDPLGLNATPLPQDSSLVETPPAENKPRKRQLSEEQPSGNGVKKPKIEIPVTPTGQSVPSSPSIPGTPTLKMWGTSPEDKQQAALLRPTEVYWDLDIQTNAVIKHRGPSEVLPPHPEVELLRSQLILKLRQHYRELCQQREGIEPPRESFNRWMLERKVVDKGSDPLLPSNCEPVVSPSMFREIMNDIPIRLSRIKFREEAKRLLFKYAEAARRLIESRSASPDSRKVVKWNVEDTFSWLRKDHSASKEDYMDRLEHLRRQCGPHVSAAAKDSVEGICSKIYHISLEYVKRIREKHLAILKENNISEEVEAPEVEPRLVYCYPVRLAVSAPPMPSVEMHMENNVVCIRYKGEMVKVSRNYFSKLWLLYRYSCIDDSAFERFLPRVWCLLRRYQMMFGVGLYEGTGLQGSLPVHVFEALHRLFGVSFECFASPLNCYFRQYCSAFPDTDGYFGSRGPCLDFAPLSGSFEANPPFCEELMDAMVSHFERLLESSPEPLSFIVFIPEWREPPTPALTRMEQSRFKRHQLILPAFEHEYRSGSQHICKKEEMHYKAVHNTAVLFLQNDPGFAKWAPTPERLQELSAAYRQSGRSHSSGSSSSSSSEAKDRDSGREQGPSREPHPT.

A disordered region spans residues 1-33 (MANENHGSPREEASLLSHSPGTSNQSQPCSPKP). Residues 16–29 (LSHSPGTSNQSQPC) show a composition bias toward polar residues. Position 30 is a phosphoserine (Ser-30). Residues 43–77 (ELVHAGWEKCWSRRENRPYYFNRFTNQSLWEMPVL) form the WW domain. Residues 88–151 (GLNATPLPQD…PSSPSIPGTP (64 aa)) are disordered. The Nuclear localization signal signature appears at 109–113 (KPRKR). Ser-116 bears the Phosphoserine mark. The segment covering 136 to 149 (PTGQSVPSSPSIPG) has biased composition (polar residues). At Thr-152 the chain carries Phosphothreonine. Residues Arg-235 and Arg-265 each coordinate substrate. S-adenosyl-L-methionine is bound at residue 553 to 556 (NPPF). Substrate is bound by residues Glu-558 and 588 to 592 (WREPP). 614–616 (FEH) provides a ligand contact to S-adenosyl-L-methionine. The disordered stretch occupies residues 663-704 (LSAAYRQSGRSHSSGSSSSSSSEAKDRDSGREQGPSREPHPT). The Nuclear localization signal signature appears at 669-684 (QSGRSHSSGSSSSSSS). Positions 670–684 (SGRSHSSGSSSSSSS) are enriched in low complexity. Basic and acidic residues predominate over residues 685 to 704 (EAKDRDSGREQGPSREPHPT).

It belongs to the CAPAM family. In terms of assembly, interacts with POLR2A; interacts with the phosphorylated C-terminal domain (CTD) of POLR2A. Ubiquitous.

It localises to the nucleus. The catalysed reaction is a 5'-end (N(7)-methyl 5'-triphosphoguanosine)-(2'-O-methyladenosine) in mRNA + S-adenosyl-L-methionine = a 5'-end (N(7)-methyl 5'-triphosphoguanosine)-(N(6),2'-O-dimethyladenosine) in mRNA + S-adenosyl-L-homocysteine + H(+). Its activity is regulated as follows. Cap-specific adenosine methyltransferase activity is inhibited by zinc. Cap-specific adenosine methyltransferase that catalyzes formation of N(6),2'-O-dimethyladenosine cap (m6A(m)) by methylating the adenosine at the second transcribed position of capped mRNAs. Recruited to the early elongation complex of RNA polymerase II (RNAPII) via interaction with POLR2A and mediates formation of m6A(m) co-transcriptionally. The polypeptide is mRNA (2'-O-methyladenosine-N(6)-)-methyltransferase (Homo sapiens (Human)).